The chain runs to 119 residues: Large ribosomal subunit protein uL18 (119 aa).

This sequence belongs to the universal ribosomal protein uL18 family. In terms of assembly, part of the 50S ribosomal subunit; part of the 5S rRNA/L5/L18/L25 subcomplex. Contacts the 5S and 23S rRNAs.

Functionally, this is one of the proteins that bind and probably mediate the attachment of the 5S RNA into the large ribosomal subunit, where it forms part of the central protuberance. The protein is Large ribosomal subunit protein uL18 of Clostridium botulinum (strain Langeland / NCTC 10281 / Type F).